The following is a 385-amino-acid chain: 8-amino-7-oxononanoate synthase (385 aa).

Arg-21 contributes to the substrate binding site. 108–109 serves as a coordination point for pyridoxal 5'-phosphate; sequence GF. His-133 contacts substrate. Residues Ser-179, His-207, and Thr-233 each contribute to the pyridoxal 5'-phosphate site. N6-(pyridoxal phosphate)lysine is present on Lys-236. Substrate is bound at residue Thr-352.

It belongs to the class-II pyridoxal-phosphate-dependent aminotransferase family. BioF subfamily. As to quaternary structure, homodimer. Requires pyridoxal 5'-phosphate as cofactor.

The catalysed reaction is 6-carboxyhexanoyl-[ACP] + L-alanine + H(+) = (8S)-8-amino-7-oxononanoate + holo-[ACP] + CO2. It functions in the pathway cofactor biosynthesis; biotin biosynthesis. Catalyzes the decarboxylative condensation of pimeloyl-[acyl-carrier protein] and L-alanine to produce 8-amino-7-oxononanoate (AON), [acyl-carrier protein], and carbon dioxide. This is 8-amino-7-oxononanoate synthase from Klebsiella pneumoniae subsp. pneumoniae (strain ATCC 700721 / MGH 78578).